We begin with the raw amino-acid sequence, 198 residues long: FMN-dependent NADH:quinone oxidoreductase (198 aa).

FMN contacts are provided by residues Ser10, 16-18 (SQS), 94-97 (MYNF), and 138-141 (TRGG).

The protein belongs to the azoreductase type 1 family. In terms of assembly, homodimer. The cofactor is FMN.

The enzyme catalyses 2 a quinone + NADH + H(+) = 2 a 1,4-benzosemiquinone + NAD(+). The catalysed reaction is N,N-dimethyl-1,4-phenylenediamine + anthranilate + 2 NAD(+) = 2-(4-dimethylaminophenyl)diazenylbenzoate + 2 NADH + 2 H(+). In terms of biological role, quinone reductase that provides resistance to thiol-specific stress caused by electrophilic quinones. Its function is as follows. Also exhibits azoreductase activity. Catalyzes the reductive cleavage of the azo bond in aromatic azo compounds to the corresponding amines. The chain is FMN-dependent NADH:quinone oxidoreductase from Shewanella baltica (strain OS223).